Here is a 303-residue protein sequence, read N- to C-terminus: Mesenteric estrogen-dependent adipogenesis protein (303 aa).

As to expression, highly expressed in the visceral fat depot.

The protein localises to the cytoplasm. Involved in processes that promote adipocyte differentiation, lipid accumulation, and glucose uptake in mature adipocytes. The protein is Mesenteric estrogen-dependent adipogenesis protein (MEDAG) of Homo sapiens (Human).